The following is a 145-amino-acid chain: Flagellar assembly factor FliW (145 aa).

Belongs to the FliW family. Interacts with translational regulator CsrA and flagellin(s).

Its subcellular location is the cytoplasm. Its function is as follows. Acts as an anti-CsrA protein, binds CsrA and prevents it from repressing translation of its target genes, one of which is flagellin. Binds to flagellin and participates in the assembly of the flagellum. In Clostridium kluyveri (strain NBRC 12016), this protein is Flagellar assembly factor FliW.